Reading from the N-terminus, the 181-residue chain is Cyclic phosphodiesterase (181 aa).

His-42 acts as the Proton donor/acceptor in catalysis. Position 44 (Thr-44) interacts with substrate. 2 disulfide bridges follow: Cys-64/Cys-177 and Cys-104/Cys-110. His-119 (proton donor/acceptor) is an active-site residue. Positions 121 and 124 each coordinate substrate.

This sequence belongs to the 2H phosphoesterase superfamily. CPD1 family. In terms of tissue distribution, expressed in leaves, stems, roots, floral buds and germinating seeds.

Its subcellular location is the cytoplasm. It carries out the reaction ADP-alpha-D-ribose 1'',2''-cyclic phosphate + H2O = ADP-alpha-D-ribose 1''-phosphate + H(+). The catalysed reaction is 2',3'-cyclophospho-AMP + H2O = adenosine 2'-phosphate + H(+). The enzyme catalyses 2',3'-cyclophospho-GMP + H2O = guanosine 2'-phosphate + H(+). It catalyses the reaction 2',3'-cyclophospho-UMP + H2O = uridine 2'-phosphate + H(+). It carries out the reaction 2',3'-cyclophospho-CMP + H2O = cytidine 2'-phosphate + H(+). Its activity is regulated as follows. Inhibited by Cu(2+) and Zn(2+) at 0.5 mM by 93 and 87% respectively. Not inhibited by Ca(2+), Mg(2+), Co(2+), Ni(2+), and EDTA at 0.5 mM. Its function is as follows. Hydrolyzes ADP-ribose 1'',2''-cyclic phosphate (Appr&gt;1) that is produced during tRNA splicing into ADP-ribose 1''-phosphate (Appr-1''p). Also acts on nucleoside 2',3'-cyclic phosphates. This chain is Cyclic phosphodiesterase, found in Arabidopsis thaliana (Mouse-ear cress).